The chain runs to 344 residues: N-acetyl-gamma-glutamyl-phosphate reductase (344 aa).

Cysteine 149 is an active-site residue.

Belongs to the NAGSA dehydrogenase family. Type 1 subfamily.

It is found in the cytoplasm. The enzyme catalyses N-acetyl-L-glutamate 5-semialdehyde + phosphate + NADP(+) = N-acetyl-L-glutamyl 5-phosphate + NADPH + H(+). Its pathway is amino-acid biosynthesis; L-arginine biosynthesis; N(2)-acetyl-L-ornithine from L-glutamate: step 3/4. Its function is as follows. Catalyzes the NADPH-dependent reduction of N-acetyl-5-glutamyl phosphate to yield N-acetyl-L-glutamate 5-semialdehyde. The protein is N-acetyl-gamma-glutamyl-phosphate reductase of Halorhodospira halophila (strain DSM 244 / SL1) (Ectothiorhodospira halophila (strain DSM 244 / SL1)).